The sequence spans 142 residues: Putative pre-16S rRNA nuclease (142 aa).

This sequence belongs to the YqgF nuclease family.

Its subcellular location is the cytoplasm. Its function is as follows. Could be a nuclease involved in processing of the 5'-end of pre-16S rRNA. In Chlorobaculum tepidum (strain ATCC 49652 / DSM 12025 / NBRC 103806 / TLS) (Chlorobium tepidum), this protein is Putative pre-16S rRNA nuclease.